We begin with the raw amino-acid sequence, 1044 residues long: Ribonucleoside-diphosphate reductase subunit alpha (1044 aa).

ATP-cone domains lie at 9–111 (YTIV…KAER), 118–217 (IAII…ARAR), and 235–325 (YVVQ…ETLG). Residues T440, 455–456 (SC), G484, 668–672 (NLCTE), and 855–859 (PTATI) contribute to the substrate site. The cysteines at positions 456 and 685 are disulfide-linked. The Proton acceptor role is filled by N668. The active-site Cysteine radical intermediate is the C670. The active-site Proton acceptor is E672.

The protein belongs to the ribonucleoside diphosphate reductase large chain family. As to quaternary structure, tetramer of two alpha and two beta subunits.

It catalyses the reaction a 2'-deoxyribonucleoside 5'-diphosphate + [thioredoxin]-disulfide + H2O = a ribonucleoside 5'-diphosphate + [thioredoxin]-dithiol. Under complex allosteric control mediated by deoxynucleoside triphosphates and ATP binding. The type of nucleotide bound at the specificity site determines substrate preference. It seems probable that ATP makes the enzyme reduce CDP and UDP, dGTP favors ADP reduction and dTTP favors GDP reduction. Functionally, provides the precursors necessary for DNA synthesis. Catalyzes the biosynthesis of deoxyribonucleotides from the corresponding ribonucleotides. This Chlamydia pneumoniae (Chlamydophila pneumoniae) protein is Ribonucleoside-diphosphate reductase subunit alpha (nrdA).